Here is a 602-residue protein sequence, read N- to C-terminus: Elongation factor 4 (602 aa).

The 183-residue stretch at Ser-7–Ala-189 folds into the tr-type G domain. Residues Asp-19–Thr-24 and Asn-136–Asp-139 each bind GTP.

This sequence belongs to the TRAFAC class translation factor GTPase superfamily. Classic translation factor GTPase family. LepA subfamily.

It is found in the cell inner membrane. It carries out the reaction GTP + H2O = GDP + phosphate + H(+). Its function is as follows. Required for accurate and efficient protein synthesis under certain stress conditions. May act as a fidelity factor of the translation reaction, by catalyzing a one-codon backward translocation of tRNAs on improperly translocated ribosomes. Back-translocation proceeds from a post-translocation (POST) complex to a pre-translocation (PRE) complex, thus giving elongation factor G a second chance to translocate the tRNAs correctly. Binds to ribosomes in a GTP-dependent manner. This is Elongation factor 4 from Synechococcus sp. (strain CC9902).